The primary structure comprises 228 residues: Ribose-5-phosphate isomerase A (228 aa).

Substrate contacts are provided by residues 29–32 (TGST), 85–88 (DGAD), and 98–101 (KGGG). Residue Glu-107 is the Proton acceptor of the active site. A substrate-binding site is contributed by Lys-125.

It belongs to the ribose 5-phosphate isomerase family. In terms of assembly, homodimer.

It catalyses the reaction aldehydo-D-ribose 5-phosphate = D-ribulose 5-phosphate. The protein operates within carbohydrate degradation; pentose phosphate pathway; D-ribose 5-phosphate from D-ribulose 5-phosphate (non-oxidative stage): step 1/1. Catalyzes the reversible conversion of ribose-5-phosphate to ribulose 5-phosphate. The chain is Ribose-5-phosphate isomerase A from Staphylococcus aureus (strain Mu50 / ATCC 700699).